We begin with the raw amino-acid sequence, 209 residues long: Large ribosomal subunit protein uL3 (209 aa).

Residues 133 to 153 (THGNSLSHRVPGSIGQNQTPG) are disordered. Q150 carries the N5-methylglutamine modification.

This sequence belongs to the universal ribosomal protein uL3 family. In terms of assembly, part of the 50S ribosomal subunit. Forms a cluster with proteins L14 and L19. Methylated by PrmB.

Its function is as follows. One of the primary rRNA binding proteins, it binds directly near the 3'-end of the 23S rRNA, where it nucleates assembly of the 50S subunit. The sequence is that of Large ribosomal subunit protein uL3 from Serratia proteamaculans (strain 568).